The sequence spans 117 residues: UPF0344 protein GWCH70_0687 (117 aa).

Transmembrane regions (helical) follow at residues 2–22 (THAHITSWLITVILFFIAVSL), 32–52 (IVQMALRLFYIFTVITGGLLL), 55–75 (IASISILYIIKAIVGLWLIGA), and 97–117 (IVAFVLVLFLGFMLPLGFDLF).

Belongs to the UPF0344 family.

It localises to the cell membrane. This Geobacillus sp. (strain WCH70) protein is UPF0344 protein GWCH70_0687.